Consider the following 490-residue polypeptide: MAETTSWIPVWFPLMVLGCFGLNWLVRKVNVWLYESSLGENRHYLPPGDLGWPFIGNMLSFLRAFKTSDPDSFTRTLIKRYGPKGIYKAHMFGNPSIIVTTSDTCRRVLTDDDAFKPGWPTSTMELIGRKSFVGISFEEHKRLRRLTAAPVNGHEALSTYIPYIEENVITVLDKWTKMGEFEFLTHLRKLTFRIIMYIFLSSESENVMDALEREYTALNYGVRAMAVNIPGFAYHRALKARKTLVAAFQSIVTERRNQRKQNILSNKKDMLDNLLNVKDEDGKTLDDEEIIDVLLMYLNAGHESSGHTIMWATVFLQEHPEVLQRAKAEQEMILKSRPEGQKGLSLKETRKMEFLSQVVDETLRVITFSLTAFREAKTDVEMNGYLIPKGWKVLTWFRDVHIDPEVFPDPRKFDPARWDNGFVPKAGAFLPFGAGSHLCPGNDLAKLEISIFLHHFLLKYQVKRSNPECPVMYLPHTRPTDNCLARISYQ.

The helical transmembrane segment at 6–26 (SWIPVWFPLMVLGCFGLNWLV) threads the bilayer. Cysteine 439 contacts heme.

This sequence belongs to the cytochrome P450 family. The cofactor is heme. As to expression, widely expressed. Highly expressed in influorescence stem, influorescence, and silique tissue. Weakly expressed in cauline and rosette leaves. Expressed at a higher level in stem and influorescence than AtKAO2/CYP88A4.

The protein localises to the endoplasmic reticulum membrane. The catalysed reaction is ent-kaur-16-en-19-oate + 3 reduced [NADPH--hemoprotein reductase] + 3 O2 = gibberellin A12 + 3 oxidized [NADPH--hemoprotein reductase] + 4 H2O + 4 H(+). It catalyses the reaction ent-kaur-16-en-19-oate + reduced [NADPH--hemoprotein reductase] + O2 = ent-7alpha-hydroxykaur-16-en-19-oate + oxidized [NADPH--hemoprotein reductase] + H2O + H(+). It carries out the reaction ent-7alpha-hydroxykaur-16-en-19-oate + reduced [NADPH--hemoprotein reductase] + O2 = gibberellin A12 aldehyde + oxidized [NADPH--hemoprotein reductase] + 2 H2O + H(+). The enzyme catalyses gibberellin A12 aldehyde + reduced [NADPH--hemoprotein reductase] + O2 = gibberellin A12 + oxidized [NADPH--hemoprotein reductase] + H2O + 2 H(+). It functions in the pathway plant hormone biosynthesis; gibberellin biosynthesis. In terms of biological role, catalyzes three successive oxidations of ent-kaurenoic acid giving gibberellin 12 (GA12), a key step in gibberellins (GAs) biosynthesis. GAs, which are involved many processes, including stem elongation, play a central role in plant development. The chain is Ent-kaurenoic acid oxidase 1 from Arabidopsis thaliana (Mouse-ear cress).